Consider the following 365-residue polypeptide: Flagellar P-ring protein (365 aa).

Residues 1–19 (MFKALAGIVLALVATLAHA) form the signal peptide.

It belongs to the FlgI family. The basal body constitutes a major portion of the flagellar organelle and consists of four rings (L,P,S, and M) mounted on a central rod.

Its subcellular location is the periplasm. It is found in the bacterial flagellum basal body. Assembles around the rod to form the L-ring and probably protects the motor/basal body from shearing forces during rotation. This chain is Flagellar P-ring protein, found in Salmonella heidelberg (strain SL476).